Consider the following 483-residue polypeptide: Cysteine proteinase 1, mitochondrial (483 aa).

Residues 1–30 (MLPTSVSWSLYLKTFRSHLLRAPQIVLKRM) constitute a mitochondrion transit peptide. Catalysis depends on residues cysteine 102, histidine 398, and asparagine 421. Residue lysine 483 is a propeptide, removed in mature form; by autocatalysis.

It belongs to the peptidase C1 family. Homohexamer. Binds to nucleic acids. Binds single-stranded DNA and RNA with higher affinity than double-stranded DNA. Post-translationally, the N-terminus of isoform Cytoplasmic is blocked.

The protein localises to the mitochondrion. It is found in the cytoplasm. The enzyme catalyses Inactivates bleomycin B2 (a cytotoxic glycometallopeptide) by hydrolysis of a carboxyamide bond of beta-aminoalanine, but also shows general aminopeptidase activity. The specificity varies somewhat with source, but amino acid arylamides of Met, Leu and Ala are preferred.. Inhibited by E64, a specific inhibitor of cysteine proteases, N-ethylmaleimide, iodacetamide, and mercury and zinc ions. Functionally, the normal physiological role of the enzyme is unknown, but it is not essential for the viability of yeast cells. Has aminopeptidase activity, shortening substrate peptides sequentially by 1 amino acid. Has bleomycin hydrolase activity, which can protect the cell from the toxic effects of bleomycin. Has homocysteine-thiolactonase activity, protecting the cell against homocysteine toxicity. Acts as a repressor in the GAL4 regulatory system, but this does not require either the peptidase or nucleic acid-binding activities. This Saccharomyces cerevisiae (strain YJM789) (Baker's yeast) protein is Cysteine proteinase 1, mitochondrial (LAP3).